A 205-amino-acid chain; its full sequence is Small ribosomal subunit protein uS4 (205 aa).

A disordered region spans residues 1 to 44 (MSKRHSQKYKIDRRMGENLWGRPKSPVNSRSYGPGQHGQRRKTK). The region spanning 94–173 (SRLDAIVYRC…LPEYIDLDAK (80 aa)) is the S4 RNA-binding domain.

This sequence belongs to the universal ribosomal protein uS4 family. As to quaternary structure, part of the 30S ribosomal subunit. Contacts protein S5. The interaction surface between S4 and S5 is involved in control of translational fidelity.

Functionally, one of the primary rRNA binding proteins, it binds directly to 16S rRNA where it nucleates assembly of the body of the 30S subunit. With S5 and S12 plays an important role in translational accuracy. This is Small ribosomal subunit protein uS4 from Maricaulis maris (strain MCS10) (Caulobacter maris).